A 156-amino-acid polypeptide reads, in one-letter code: Endoribonuclease YbeY (156 aa).

Zn(2+) contacts are provided by histidine 111, histidine 115, and histidine 121.

The protein belongs to the endoribonuclease YbeY family. It depends on Zn(2+) as a cofactor.

Its subcellular location is the cytoplasm. Functionally, single strand-specific metallo-endoribonuclease involved in late-stage 70S ribosome quality control and in maturation of the 3' terminus of the 16S rRNA. In Hahella chejuensis (strain KCTC 2396), this protein is Endoribonuclease YbeY.